The chain runs to 206 residues: MTKRTSAKYKIDRRMGENIWGRPKSPVNRREYGPGQHGQRRKGKMSDFGLQLRAKQKLKGYYGDLTEKQFRRIYGEAERVKGDTGENLIGLLERRLDAVVYRAKFVPTVFAARQFVNHGHVLVNGKRVNIPSYRVKEGDVIEVRERSKQLASVLEAVSLAERDVPDYLEVDHSKMTATFVRTPHLGDVPYAVVMEPNLVVEYYAKN.

The tract at residues 18–45 (NIWGRPKSPVNRREYGPGQHGQRRKGKM) is disordered. Residues 94-157 (RRLDAVVYRA…KQLASVLEAV (64 aa)) enclose the S4 RNA-binding domain.

It belongs to the universal ribosomal protein uS4 family. Part of the 30S ribosomal subunit. Contacts protein S5. The interaction surface between S4 and S5 is involved in control of translational fidelity.

Functionally, one of the primary rRNA binding proteins, it binds directly to 16S rRNA where it nucleates assembly of the body of the 30S subunit. In terms of biological role, with S5 and S12 plays an important role in translational accuracy. This Ruegeria pomeroyi (strain ATCC 700808 / DSM 15171 / DSS-3) (Silicibacter pomeroyi) protein is Small ribosomal subunit protein uS4.